We begin with the raw amino-acid sequence, 338 residues long: High mobility group B protein 9 (338 aa).

Residues 38–129 (VKDSSVFWDT…LLFHYEQVHL (92 aa)) enclose the ARID domain. Residues 233–259 (TGRRRRRLGKRRRSRRREDPNYPKPNR) are disordered. Residues 235 to 247 (RRRRRLGKRRRSR) show a composition bias toward basic residues. Positions 255–322 (PKPNRSGYNF…RYQRELNEYR (68 aa)) form a DNA-binding region, HMG box.

In terms of tissue distribution, predominantly expressed in leaves, flowers and seedlings.

It localises to the nucleus. Its function is as follows. Binds preferentially DNA with A/T-rich content. Required for karyogamy during female gametophyte development, when the two polar nuclei fuse to form the diploid central cell nucleus. In Arabidopsis thaliana (Mouse-ear cress), this protein is High mobility group B protein 9 (HMGB9).